A 116-amino-acid polypeptide reads, in one-letter code: Protein Wnt-5b (116 aa).

Residue serine 1 is the site of O-palmitoleoyl serine; by PORCN attachment. N-linked (GlcNAc...) asparagine glycans are attached at residues asparagine 69 and asparagine 83. A disulfide bond links cysteine 82 and cysteine 97.

This sequence belongs to the Wnt family. Post-translationally, palmitoleoylation is required for efficient binding to frizzled receptors. Depalmitoleoylation leads to Wnt signaling pathway inhibition.

The protein localises to the secreted. The protein resides in the extracellular space. It localises to the extracellular matrix. Its function is as follows. Ligand for members of the frizzled family of seven transmembrane receptors. Probable developmental protein. May be a signaling molecule which affects the development of discrete regions of tissues. Is likely to signal over only few cell diameters. This chain is Protein Wnt-5b (WNT-5B), found in Alopias vulpinus (Common thresher shark).